The chain runs to 299 residues: Oxygen-dependent coproporphyrinogen-III oxidase (299 aa).

Substrate is bound at residue Ser92. The a divalent metal cation site is built by His96 and His106. The Proton donor role is filled by His106. Residue 108 to 110 (NVR) participates in substrate binding. A divalent metal cation-binding residues include His145 and His175. Residues 240–275 (YVEFNLVWDRGTLFGLQTGGRTESILMSMPPLVRWE) are important for dimerization. 258 to 260 (GGR) lines the substrate pocket.

This sequence belongs to the aerobic coproporphyrinogen-III oxidase family. In terms of assembly, homodimer. The cofactor is a divalent metal cation.

It is found in the cytoplasm. It carries out the reaction coproporphyrinogen III + O2 + 2 H(+) = protoporphyrinogen IX + 2 CO2 + 2 H2O. It participates in porphyrin-containing compound metabolism; protoporphyrin-IX biosynthesis; protoporphyrinogen-IX from coproporphyrinogen-III (O2 route): step 1/1. In terms of biological role, involved in the heme biosynthesis. Catalyzes the aerobic oxidative decarboxylation of propionate groups of rings A and B of coproporphyrinogen-III to yield the vinyl groups in protoporphyrinogen-IX. This Citrobacter koseri (strain ATCC BAA-895 / CDC 4225-83 / SGSC4696) protein is Oxygen-dependent coproporphyrinogen-III oxidase.